We begin with the raw amino-acid sequence, 315 residues long: MNDWTALTVTTTTEAIEAVSNILMEAGAVGIQIKDAADFKKETVDAHGTWFDPKTVPHLASGAQVIGYFDPATSLVEQRDHIATRVRGLAQFGLDPGAATVTLADVRQADWANVWKQYYHPLRVSRFLTIVPKWEHYTPQQAGELQLTLDPGMAFGTGTHPTTQLMLSLLESVIRGGETMIDVGTGSGILAIAAERLGVGDILATDVDEIAVRNAEANIKLNPVSHITVIANDLLKGITLSADLIVANILAEVLVPLIPQVRPRLKAHGHFLLAGIIANKATLIIRTLEDNGFSIAQRREAGGWVALDAVIKETA.

4 residues coordinate S-adenosyl-L-methionine: T163, G184, D206, and N248.

It belongs to the methyltransferase superfamily. PrmA family.

It localises to the cytoplasm. It carries out the reaction L-lysyl-[protein] + 3 S-adenosyl-L-methionine = N(6),N(6),N(6)-trimethyl-L-lysyl-[protein] + 3 S-adenosyl-L-homocysteine + 3 H(+). Functionally, methylates ribosomal protein L11. This Lacticaseibacillus paracasei (strain ATCC 334 / BCRC 17002 / CCUG 31169 / CIP 107868 / KCTC 3260 / NRRL B-441) (Lactobacillus paracasei) protein is Ribosomal protein L11 methyltransferase.